A 21-amino-acid polypeptide reads, in one-letter code: Putative NADH dehydrogenase subunit PS9 (21 aa).

The sequence is that of Putative NADH dehydrogenase subunit PS9 from Pinus strobus (Eastern white pine).